Reading from the N-terminus, the 77-residue chain is Conotoxin VnMKLT1-012 (77 aa).

Positions 1 to 22 are cleaved as a signal peptide; sequence MKLTCMMIVAVLFLTAWTFVTA. A propeptide spanning residues 23 to 48 is cleaved from the precursor; sequence DDSRNGLDYLFPKARHEMNPKASRDI. 3 disulfides stabilise this stretch: Cys-51–Cys-68, Cys-58–Cys-72, and Cys-67–Cys-76.

Belongs to the conotoxin O1 superfamily. In terms of tissue distribution, expressed by the venom duct.

The protein resides in the secreted. The polypeptide is Conotoxin VnMKLT1-012 (Conus ventricosus (Mediterranean cone)).